Reading from the N-terminus, the 322-residue chain is Protein SEC13 homolog (322 aa).

The residue at position 2 (Val-2) is an N-acetylvaline. WD repeat units follow at residues Ser-11–Ile-50, Gly-55–Ser-96, Gly-101–Lys-144, Ala-148–Glu-204, Ala-210–Trp-253, and Lys-260–Cys-299. Ser-184 bears the Phosphoserine mark. Ser-309 carries the post-translational modification Phosphoserine.

Belongs to the WD repeat SEC13 family. At the nuclear pore: component of the Y-shaped Nup107-160 subcomplex of the nuclear pore complex (NPC). The Nup107-160 subcomplex includes NUP160, NUP133, NUP107, NUP98, NUP85, NUP43, NUP37, SEH1 and SEC13. At the COPII coat complex: interacts with SEC31A and SEC31B. Interacts with SEC16A. Interacts with SEC16B. Component of the GATOR2 subcomplex, composed of MIOS, SEC13, SEH1L, WDR24 and WDR59. The GATOR2 complex interacts with CASTOR1 and CASTOR2; the interaction is negatively regulated by arginine. The GATOR2 complex interacts with SESN1, SESN2 and SESN3; the interaction is negatively regulated by amino acids.

The protein localises to the cytoplasmic vesicle. It localises to the COPII-coated vesicle membrane. It is found in the endoplasmic reticulum membrane. The protein resides in the nucleus. Its subcellular location is the nuclear pore complex. The protein localises to the lysosome membrane. With respect to regulation, the GATOR2 complex is negatively regulated by the upstream amino acid sensors CASTOR1 and SESN2, which sequester the GATOR2 complex in absence of amino acids. In the presence of abundant amino acids, GATOR2 is released from CASTOR1 and SESN2 and activated. In terms of biological role, functions as a component of the nuclear pore complex (NPC) and the COPII coat. At the endoplasmic reticulum, SEC13 is involved in the biogenesis of COPII-coated vesicles. Required for the exit of adipsin (CFD/ADN), an adipocyte-secreted protein from the endoplasmic reticulum. Its function is as follows. As a component of the GATOR2 complex, functions as an activator of the amino acid-sensing branch of the mTORC1 signaling pathway. The GATOR2 complex indirectly activates mTORC1 through the inhibition of the GATOR1 subcomplex. GATOR2 probably acts as an E3 ubiquitin-protein ligase toward GATOR1. In the presence of abundant amino acids, the GATOR2 complex mediates ubiquitination of the NPRL2 core component of the GATOR1 complex, leading to GATOR1 inactivation. In the absence of amino acids, GATOR2 is inhibited, activating the GATOR1 complex. Within the GATOR2 complex, SEC13 and SEH1L are required to stabilize the complex. This is Protein SEC13 homolog from Homo sapiens (Human).